The following is a 663-amino-acid chain: Meiotically up-regulated gene 60 protein (663 aa).

The KH domain maps to Pro578–Leu644.

It is found in the cytoplasm. The protein localises to the nucleus. Its subcellular location is the cytoskeleton. The protein resides in the microtubule organizing center. It localises to the spindle pole body. Has a role in meiosis. This chain is Meiotically up-regulated gene 60 protein (mug60), found in Schizosaccharomyces pombe (strain 972 / ATCC 24843) (Fission yeast).